The following is a 143-amino-acid chain: Large ribosomal subunit protein uL11 (143 aa).

Belongs to the universal ribosomal protein uL11 family. Part of the ribosomal stalk of the 50S ribosomal subunit. Interacts with L10 and the large rRNA to form the base of the stalk. L10 forms an elongated spine to which L12 dimers bind in a sequential fashion forming a multimeric L10(L12)X complex. Post-translationally, one or more lysine residues are methylated.

In terms of biological role, forms part of the ribosomal stalk which helps the ribosome interact with GTP-bound translation factors. This Bordetella parapertussis (strain 12822 / ATCC BAA-587 / NCTC 13253) protein is Large ribosomal subunit protein uL11.